A 175-amino-acid chain; its full sequence is Adenine phosphoribosyltransferase (175 aa).

This sequence belongs to the purine/pyrimidine phosphoribosyltransferase family. Homodimer.

Its subcellular location is the cytoplasm. The enzyme catalyses AMP + diphosphate = 5-phospho-alpha-D-ribose 1-diphosphate + adenine. It functions in the pathway purine metabolism; AMP biosynthesis via salvage pathway; AMP from adenine: step 1/1. Catalyzes a salvage reaction resulting in the formation of AMP, that is energically less costly than de novo synthesis. The polypeptide is Adenine phosphoribosyltransferase (Francisella philomiragia subsp. philomiragia (strain ATCC 25017 / CCUG 19701 / FSC 153 / O#319-036)).